The chain runs to 402 residues: 3-isopropylmalate dehydratase large subunit 2 (402 aa).

Positions 280, 341, and 344 each coordinate [4Fe-4S] cluster.

It belongs to the aconitase/IPM isomerase family. LeuC type 2 subfamily. Heterodimer of LeuC and LeuD. [4Fe-4S] cluster serves as cofactor.

It carries out the reaction (2R,3S)-3-isopropylmalate = (2S)-2-isopropylmalate. It participates in amino-acid biosynthesis; L-leucine biosynthesis; L-leucine from 3-methyl-2-oxobutanoate: step 2/4. Its function is as follows. Catalyzes the isomerization between 2-isopropylmalate and 3-isopropylmalate, via the formation of 2-isopropylmaleate. This is 3-isopropylmalate dehydratase large subunit 2 from Methanopyrus kandleri (strain AV19 / DSM 6324 / JCM 9639 / NBRC 100938).